The sequence spans 307 residues: Elongation factor Ts (307 aa).

Residues 80–83 form an involved in Mg(2+) ion dislocation from EF-Tu region; sequence TDFV.

It belongs to the EF-Ts family.

The protein resides in the cytoplasm. Functionally, associates with the EF-Tu.GDP complex and induces the exchange of GDP to GTP. It remains bound to the aminoacyl-tRNA.EF-Tu.GTP complex up to the GTP hydrolysis stage on the ribosome. The sequence is that of Elongation factor Ts from Albidiferax ferrireducens (strain ATCC BAA-621 / DSM 15236 / T118) (Rhodoferax ferrireducens).